A 278-amino-acid polypeptide reads, in one-letter code: Cell division protein FtsQ (278 aa).

The Cytoplasmic portion of the chain corresponds to 1–6 (MNATLR). Residues 7-27 (ILAWLIAVALVALPVVAVLNG) form a helical membrane-spanning segment. Residues 28–278 (WVGAERWPLA…SPFAIPGFKT (251 aa)) are Periplasmic-facing. The POTRA domain occupies 34–103 (WPLARLRVSG…DVLEVHVVEH (70 aa)).

This sequence belongs to the FtsQ/DivIB family. FtsQ subfamily. Part of a complex composed of FtsB, FtsL and FtsQ.

The protein resides in the cell inner membrane. Essential cell division protein. May link together the upstream cell division proteins, which are predominantly cytoplasmic, with the downstream cell division proteins, which are predominantly periplasmic. May control correct divisome assembly. The polypeptide is Cell division protein FtsQ (Xanthomonas campestris pv. campestris (strain ATCC 33913 / DSM 3586 / NCPPB 528 / LMG 568 / P 25)).